Reading from the N-terminus, the 266-residue chain is Small ribosomal subunit protein eS1 (266 aa).

Positions 236 to 266 (GAGTAAKATGDDTGAKVERADGYEPPIQESV) are disordered. The span at 244–257 (TGDDTGAKVERADG) shows a compositional bias: basic and acidic residues.

This sequence belongs to the eukaryotic ribosomal protein eS1 family. As to quaternary structure, component of the small ribosomal subunit. Mature ribosomes consist of a small (40S) and a large (60S) subunit. The 40S subunit contains about 33 different proteins and 1 molecule of RNA (18S). The 60S subunit contains about 49 different proteins and 3 molecules of RNA (28S, 5.8S and 5S). Part of the small subunit (SSU) processome, composed of more than 70 proteins and the RNA chaperone small nucleolar RNA (snoRNA) U3.

The protein localises to the cytoplasm. Its subcellular location is the nucleus. It localises to the nucleolus. In terms of biological role, component of the small ribosomal subunit. The ribosome is a large ribonucleoprotein complex responsible for the synthesis of proteins in the cell. Part of the small subunit (SSU) processome, first precursor of the small eukaryotic ribosomal subunit. During the assembly of the SSU processome in the nucleolus, many ribosome biogenesis factors, an RNA chaperone and ribosomal proteins associate with the nascent pre-rRNA and work in concert to generate RNA folding, modifications, rearrangements and cleavage as well as targeted degradation of pre-ribosomal RNA by the RNA exosome. May play a role during erythropoiesis. This is Small ribosomal subunit protein eS1 (rps3a) from Tetraodon nigroviridis (Spotted green pufferfish).